We begin with the raw amino-acid sequence, 241 residues long: Probable transcriptional regulatory protein lmo1535 (241 aa).

Residues 1 to 14 (MSGHSKWNNIQGRK) show a composition bias toward polar residues. A disordered region spans residues 1–22 (MSGHSKWNNIQGRKNAQDSKRS).

It belongs to the TACO1 family.

The protein localises to the cytoplasm. The polypeptide is Probable transcriptional regulatory protein lmo1535 (Listeria monocytogenes serovar 1/2a (strain ATCC BAA-679 / EGD-e)).